A 492-amino-acid polypeptide reads, in one-letter code: 2,3-bisphosphoglycerate-independent phosphoglycerate mutase (492 aa).

The Mn(2+) site is built by Asp-11 and Ser-61. The Phosphoserine intermediate role is filled by Ser-61. Residues His-118, 147 to 148 (RD), Arg-178, Arg-184, 248 to 251 (RNDR), and Lys-320 each bind substrate. Residues Asp-386, His-390, Asp-427, His-428, and His-445 each contribute to the Mn(2+) site.

Belongs to the BPG-independent phosphoglycerate mutase family. Monomer. It depends on Mn(2+) as a cofactor.

The catalysed reaction is (2R)-2-phosphoglycerate = (2R)-3-phosphoglycerate. It functions in the pathway carbohydrate degradation; glycolysis; pyruvate from D-glyceraldehyde 3-phosphate: step 3/5. Catalyzes the interconversion of 2-phosphoglycerate and 3-phosphoglycerate. This is 2,3-bisphosphoglycerate-independent phosphoglycerate mutase from Campylobacter jejuni subsp. jejuni serotype O:2 (strain ATCC 700819 / NCTC 11168).